The primary structure comprises 77 residues: MARVCQVTGKGPMVGNNVSHANNKTKRRFLPNLHYRRFWLETENRWVRLRISNAALRLIDKVGIEQVVADLRARGEL.

It belongs to the bacterial ribosomal protein bL28 family.

This Leptothrix cholodnii (strain ATCC 51168 / LMG 8142 / SP-6) (Leptothrix discophora (strain SP-6)) protein is Large ribosomal subunit protein bL28.